We begin with the raw amino-acid sequence, 284 residues long: Shikimate dehydrogenase (NADP(+)) (284 aa).

Shikimate-binding positions include 20–22 (SIS) and serine 67. The active-site Proton acceptor is lysine 71. Residue aspartate 83 coordinates NADP(+). Residues asparagine 92 and aspartate 107 each coordinate shikimate. NADP(+) is bound by residues 129 to 133 (GAGGA) and isoleucine 227. Tyrosine 229 provides a ligand contact to shikimate. Glycine 250 is an NADP(+) binding site.

This sequence belongs to the shikimate dehydrogenase family. As to quaternary structure, homodimer.

The enzyme catalyses shikimate + NADP(+) = 3-dehydroshikimate + NADPH + H(+). It participates in metabolic intermediate biosynthesis; chorismate biosynthesis; chorismate from D-erythrose 4-phosphate and phosphoenolpyruvate: step 4/7. In terms of biological role, involved in the biosynthesis of the chorismate, which leads to the biosynthesis of aromatic amino acids. Catalyzes the reversible NADPH linked reduction of 3-dehydroshikimate (DHSA) to yield shikimate (SA). The protein is Shikimate dehydrogenase (NADP(+)) of Streptococcus pneumoniae (strain Taiwan19F-14).